The following is a 417-amino-acid chain: Tryptophan synthase beta chain (417 aa).

Residue lysine 111 is modified to N6-(pyridoxal phosphate)lysine.

It belongs to the TrpB family. As to quaternary structure, tetramer of two alpha and two beta chains. Pyridoxal 5'-phosphate is required as a cofactor.

It carries out the reaction (1S,2R)-1-C-(indol-3-yl)glycerol 3-phosphate + L-serine = D-glyceraldehyde 3-phosphate + L-tryptophan + H2O. The protein operates within amino-acid biosynthesis; L-tryptophan biosynthesis; L-tryptophan from chorismate: step 5/5. The beta subunit is responsible for the synthesis of L-tryptophan from indole and L-serine. This chain is Tryptophan synthase beta chain, found in Fervidobacterium nodosum (strain ATCC 35602 / DSM 5306 / Rt17-B1).